Consider the following 451-residue polypeptide: Phosphoglucosamine mutase (451 aa).

The active-site Phosphoserine intermediate is Ser-103. Mg(2+) is bound by residues Ser-103, Asp-243, Asp-245, and Asp-247. Position 103 is a phosphoserine (Ser-103).

This sequence belongs to the phosphohexose mutase family. Requires Mg(2+) as cofactor. Post-translationally, activated by phosphorylation.

It catalyses the reaction alpha-D-glucosamine 1-phosphate = D-glucosamine 6-phosphate. Catalyzes the conversion of glucosamine-6-phosphate to glucosamine-1-phosphate. This is Phosphoglucosamine mutase from Lactobacillus johnsonii (strain CNCM I-12250 / La1 / NCC 533).